We begin with the raw amino-acid sequence, 663 residues long: Translation factor GUF1, mitochondrial (663 aa).

Residues 1–37 constitute a mitochondrion transit peptide; it reads MRGCLQSVRLLTTALGQSPRRPLPFAFRLPPNASRLF. In terms of domain architecture, tr-type G spans 65-245; that stretch reads ERYRNFCIVA…TIVEQIPAPI (181 aa). GTP-binding positions include 74–81, 138–142, and 192–195; these read AHVDHGKS, DTPGH, and NKVD.

It belongs to the TRAFAC class translation factor GTPase superfamily. Classic translation factor GTPase family. LepA subfamily.

It is found in the mitochondrion inner membrane. It catalyses the reaction GTP + H2O = GDP + phosphate + H(+). Functionally, promotes mitochondrial protein synthesis. May act as a fidelity factor of the translation reaction, by catalyzing a one-codon backward translocation of tRNAs on improperly translocated ribosomes. Binds to mitochondrial ribosomes in a GTP-dependent manner. The protein is Translation factor GUF1, mitochondrial of Uncinocarpus reesii (strain UAMH 1704).